Reading from the N-terminus, the 145-residue chain is Ribosome maturation factor RimP (145 aa).

It belongs to the RimP family.

The protein localises to the cytoplasm. In terms of biological role, required for maturation of 30S ribosomal subunits. This Borreliella afzelii (strain PKo) (Borrelia afzelii) protein is Ribosome maturation factor RimP.